Reading from the N-terminus, the 279-residue chain is Thermitase (279 aa).

Aspartate 5 contributes to the Ca(2+) binding site. Residues 12–277 (QYGPQKIQAP…KGRVNAYKAV (266 aa)) form the Peptidase S8 domain. Aspartate 38 acts as the Charge relay system in catalysis. Residues aspartate 47, aspartate 57, aspartate 60, aspartate 62, threonine 64, and glutamine 66 each contribute to the Ca(2+) site. Histidine 71 functions as the Charge relay system in the catalytic mechanism. Ca(2+) is bound by residues valine 82, asparagine 85, threonine 87, and isoleucine 89. Residues alanine 173, tyrosine 175, and alanine 178 each contribute to the Na(+) site. Ca(2+) contacts are provided by valine 199 and aspartate 201. Aspartate 201 contacts Na(+). The active-site Charge relay system is the serine 225.

The protein belongs to the peptidase S8 family. The cofactor is Ca(2+). Na(+) is required as a cofactor.

It is found in the secreted. The catalysed reaction is Hydrolysis of proteins, including collagen.. This chain is Thermitase, found in Thermoactinomyces vulgaris.